The primary structure comprises 441 residues: Velvet complex subunit B (441 aa).

Composition is skewed to polar residues over residues 1–14 (MNPGYSSTASQPGH) and 60–75 (MMQQPQDQPAPSSTTE). The disordered stretch occupies residues 1–104 (MNPGYSSTAS…QPHVGEQDGR (104 aa)). Residues 100 to 426 (EQDGRKYRLD…AGQGIKIPIR (327 aa)) enclose the Velvet domain.

It belongs to the velvet family. VelB subfamily. Component of the heterotrimeric velvet complex composed of LAEA, VEA and VELB; VEA acting as a bridging protein between LAEA and VELB. Forms a heterodimeric complex with VOSA; the formation of the VELB-VOSA complex is light-dependent.

The protein localises to the nucleus. It localises to the cytoplasm. In terms of biological role, component of the velvet transcription factor complex that controls sexual/asexual developmental ratio in response to light, promoting sexual development in the darkness while stimulating asexual sporulation under illumination. The velvet complex acts as a global regulator for secondary metabolite gene expression. Component of the VELB-VOSA heterodimeric complex that plays a dual role in activating genes associated with spore maturation and repressing certain development-associated genes. The VELB-VOSA complex binds DNA through the DNA-binding domain of VOSA that recognizes an 11-nucleotide consensus sequence 5'-CTGGCCGCGGC-3' consisting of two motifs in the promoters of key developmental regulatory genes. Involved in the regulation of the response to eactive oxygen species (ROS) stress. The protein is Velvet complex subunit B of Pyricularia oryzae (strain 70-15 / ATCC MYA-4617 / FGSC 8958) (Rice blast fungus).